A 933-amino-acid polypeptide reads, in one-letter code: 2-oxoglutarate dehydrogenase E1 component (933 aa).

Belongs to the alpha-ketoglutarate dehydrogenase family. Homodimer. Part of the 2-oxoglutarate dehydrogenase (OGDH) complex composed of E1 (2-oxoglutarate dehydrogenase), E2 (dihydrolipoamide succinyltransferase) and E3 (dihydrolipoamide dehydrogenase); the complex contains multiple copies of the three enzymatic components (E1, E2 and E3). It depends on thiamine diphosphate as a cofactor.

It carries out the reaction N(6)-[(R)-lipoyl]-L-lysyl-[protein] + 2-oxoglutarate + H(+) = N(6)-[(R)-S(8)-succinyldihydrolipoyl]-L-lysyl-[protein] + CO2. Its function is as follows. E1 component of the 2-oxoglutarate dehydrogenase (OGDH) complex which catalyzes the decarboxylation of 2-oxoglutarate, the first step in the conversion of 2-oxoglutarate to succinyl-CoA and CO(2). The chain is 2-oxoglutarate dehydrogenase E1 component (sucA) from Rickettsia typhi (strain ATCC VR-144 / Wilmington).